The following is a 666-amino-acid chain: Protein translocase subunit SecA 2 (666 aa).

Residues Gln-119, 137-141, and Asp-546 contribute to the ATP site; that span reads GEGKS.

The protein belongs to the SecA family. In terms of assembly, monomer and homodimer. Part of the essential Sec protein translocation apparatus which comprises SecA, SecYEG and auxiliary proteins SecDF-YajC and YidC.

The protein localises to the cell inner membrane. It localises to the cytoplasm. It carries out the reaction ATP + H2O + cellular proteinSide 1 = ADP + phosphate + cellular proteinSide 2.. Part of the Sec protein translocase complex. Interacts with the SecYEG preprotein conducting channel. Has a central role in coupling the hydrolysis of ATP to the transfer of proteins into and across the cell membrane, serving both as a receptor for the preprotein-SecB complex and as an ATP-driven molecular motor driving the stepwise translocation of polypeptide chains across the membrane. The sequence is that of Protein translocase subunit SecA 2 from Nitrosospira multiformis (strain ATCC 25196 / NCIMB 11849 / C 71).